A 193-amino-acid chain; its full sequence is Peptidyl-tRNA hydrolase (193 aa).

H17 serves as a coordination point for tRNA. H22 serves as the catalytic Proton acceptor. Positions 68, 70, and 116 each coordinate tRNA.

Belongs to the PTH family. Monomer.

The protein localises to the cytoplasm. It catalyses the reaction an N-acyl-L-alpha-aminoacyl-tRNA + H2O = an N-acyl-L-amino acid + a tRNA + H(+). Its function is as follows. Hydrolyzes ribosome-free peptidyl-tRNAs (with 1 or more amino acids incorporated), which drop off the ribosome during protein synthesis, or as a result of ribosome stalling. Functionally, catalyzes the release of premature peptidyl moieties from peptidyl-tRNA molecules trapped in stalled 50S ribosomal subunits, and thus maintains levels of free tRNAs and 50S ribosomes. The polypeptide is Peptidyl-tRNA hydrolase (Xanthomonas axonopodis pv. citri (strain 306)).